Here is a 45-residue protein sequence, read N- to C-terminus: Large ribosomal subunit protein bL34 (45 aa).

The disordered stretch occupies residues 22–45; it reads RMRTKSGQNVIKARRRKGRARLTV. Basic residues predominate over residues 33–45; the sequence is KARRRKGRARLTV.

The protein belongs to the bacterial ribosomal protein bL34 family.

The protein is Large ribosomal subunit protein bL34 of Thermosynechococcus vestitus (strain NIES-2133 / IAM M-273 / BP-1).